The chain runs to 290 residues: Bifunctional protein FolD (290 aa).

NADP(+) contacts are provided by residues 169-171 (GAS), I194, and I235.

It belongs to the tetrahydrofolate dehydrogenase/cyclohydrolase family. In terms of assembly, homodimer.

It carries out the reaction (6R)-5,10-methylene-5,6,7,8-tetrahydrofolate + NADP(+) = (6R)-5,10-methenyltetrahydrofolate + NADPH. The enzyme catalyses (6R)-5,10-methenyltetrahydrofolate + H2O = (6R)-10-formyltetrahydrofolate + H(+). It participates in one-carbon metabolism; tetrahydrofolate interconversion. Functionally, catalyzes the oxidation of 5,10-methylenetetrahydrofolate to 5,10-methenyltetrahydrofolate and then the hydrolysis of 5,10-methenyltetrahydrofolate to 10-formyltetrahydrofolate. The chain is Bifunctional protein FolD from Helicobacter pylori (strain HPAG1).